Here is a 707-residue protein sequence, read N- to C-terminus: Solute carrier family 15 member 1 (707 aa).

The helical transmembrane segment at 1–21 (MGMSKSLSCFGYPLSIFFIVV) threads the bilayer. Residues 22–53 (NEFCERFSYYGMRALLILYFRNFIGWDDNLST) are Extracellular-facing. N-linked (GlcNAc...) asparagine glycosylation occurs at N50. The helical transmembrane segment at 54–74 (VIYHTFVALCYLTPILGALIA) threads the bilayer. Over 75–82 (DAWLGKFK) the chain is Cytoplasmic. A helical membrane pass occupies residues 83 to 103 (TIVWLSIVYTIGQAVTSLSSV). At 104–118 (NELTDNNHDGTPDSL) the chain is on the extracellular side. The helical transmembrane segment at 119–139 (PVHVAVCMIGLLLIALGTGGI) threads the bilayer. Topologically, residues 140–161 (KPCVSAFGGDQFEEGQEKQRNR) are cytoplasmic. The helical transmembrane segment at 162–182 (FFSIFYLAINAGSLLSTIITP) threads the bilayer. Over 183–198 (MVRVQQCGIHVKQACY) the chain is Extracellular. The chain crosses the membrane as a helical span at residues 199 to 219 (PLAFGIPAILMAVSLIVFIIG). At 220–276 (SGMYKKFKPQGNILSKVVKCICFAIKNRFRHRSKQFPKRAHWLDWAKEKYDERLIAQ) the chain is on the cytoplasmic side. The helical transmembrane segment at 277 to 297 (IKMVTRVLFLYIPLPMFWALF) threads the bilayer. The Extracellular segment spans residues 298-327 (DQQGSRWTLQATTMSGRIGILEIQPDQMQT). A helical transmembrane segment spans residues 328 to 348 (VNTILIIILVPIMDAVVYPLI). At 349–361 (AKCGLNFTSLKKM) the chain is on the cytoplasmic side. The chain crosses the membrane as a helical span at residues 362–382 (TIGMFLASMAFVAAAILQVEI). At 383–583 (DKTLPVFPKA…PPNTMNMAWQ (201 aa)) the chain is on the extracellular side. The extracellular domain (ECD) stretch occupies residues 383–583 (DKTLPVFPKA…PPNTMNMAWQ (201 aa)). 3 N-linked (GlcNAc...) asparagine glycosylation sites follow: N439, N498, and N513. A helical membrane pass occupies residues 584 to 604 (IPQYFLITSGEVVFSITGLEF). The Cytoplasmic segment spans residues 605–618 (SYSQAPSNMKSVLQ). A helical membrane pass occupies residues 619–639 (AGWLLTVAVGNIIVLIVAGAG). Residues 640–644 (QINKQ) lie on the Extracellular side of the membrane. A helical transmembrane segment spans residues 645-665 (WAEYILFAALLLVVCVIFAIM). Residues 666–707 (ARFYTYVNPAEIEAQFEEDEKKKNPEKNDLYPSLAPVSQTQM) lie on the Cytoplasmic side of the membrane. The disordered stretch occupies residues 682–707 (EEDEKKKNPEKNDLYPSLAPVSQTQM). Residues 684–694 (DEKKKNPEKND) are compositionally biased toward basic and acidic residues.

It belongs to the major facilitator superfamily. Proton-dependent oligopeptide transporter (POT/PTR) (TC 2.A.17) family. In terms of assembly, interacts (via extracellular domain region) with trypsin. As to expression, intestine, kidney, liver and low in brain.

It is found in the apical cell membrane. It catalyses the reaction a dipeptide(out) + H(+)(out) = a dipeptide(in) + H(+)(in). It carries out the reaction an L-amino acid tripeptide(out) + H(+)(out) = an L-amino acid tripeptide(in) + H(+)(in). The enzyme catalyses L-alanyl-L-lysine(out) + H(+)(out) = L-alanyl-L-lysine(in) + H(+)(in). The catalysed reaction is L-alanyl-L-proline(out) + H(+)(out) = L-alanyl-L-proline(in) + H(+)(in). It catalyses the reaction L-alanyl-L-valine(out) + H(+)(out) = L-alanyl-L-valine(in) + H(+)(in). It carries out the reaction carnosine(out) + H(+)(out) = carnosine(in) + H(+)(in). The enzyme catalyses glycyl-L-glutamine(out) + H(+)(out) = glycyl-L-glutamine(in) + H(+)(in). The catalysed reaction is glycyl-L-leucine(out) + H(+)(out) = glycyl-L-leucine(in) + H(+)(in). It catalyses the reaction glycyl-L-proline(out) + H(+)(out) = glycyl-L-proline(in) + H(+)(in). It carries out the reaction glycyl-sarcosine(out) + H(+)(out) = glycyl-sarcosine(in) + H(+)(in). The enzyme catalyses L-leucyl-L-leucine(out) + H(+)(out) = L-leucyl-L-leucine(in) + H(+)(in). The catalysed reaction is L-leucyl-L-proline(out) + H(+)(out) = L-leucyl-L-proline(in) + H(+)(in). It catalyses the reaction L-phenylalanyl-L-leucine(out) + H(+)(out) = L-phenylalanyl-L-leucine(in) + H(+)(in). It carries out the reaction L-phenylalanyl-L-phenylalanine(out) + H(+)(out) = L-phenylalanyl-L-phenylalanine(in) + H(+)(in). The enzyme catalyses L-lysyl-glycine(out) + H(+)(out) = L-lysyl-glycine(in) + H(+)(in). The catalysed reaction is L-tyrosylglycine(out) + H(+)(out) = L-tyrosylglycine(in) + H(+)(in). It catalyses the reaction L-alanyl-L-aspartate(out) + 2 H(+)(out) = L-alanyl-L-aspartate(in) + 2 H(+)(in). It carries out the reaction L-aspartyl-glycine(out) + 2 H(+)(out) = L-aspartyl-glycine(in) + 2 H(+)(in). The enzyme catalyses glycyl-L-aspartate(out) + 2 H(+)(out) = glycyl-L-aspartate(in) + 2 H(+)(in). The catalysed reaction is glycyl-L-glutamate(out) + 2 H(+)(out) = glycyl-L-glutamate(in) + 2 H(+)(in). It catalyses the reaction L-alanyl-L-leucyl-L-alanine(out) + H(+)(out) = L-alanyl-L-leucyl-L-alanine(in) + H(+)(in). It carries out the reaction L-alanyl-L-prolylglycine(out) + H(+)(out) = L-alanyl-L-prolylglycine(in) + H(+)(in). The enzyme catalyses glycylglycyl-L-isoleucine(out) + H(+)(out) = glycylglycyl-L-isoleucine(in) + H(+)(in). The catalysed reaction is glycylglycyl-L-proline(out) + H(+)(out) = glycylglycyl-L-proline(in) + H(+)(in). It catalyses the reaction L-methionyl-L-phenylalanyl-L-methionine(out) + H(+)(out) = L-methionyl-L-phenylalanyl-L-methionine(in) + H(+)(in). It carries out the reaction N-acetyl-D-muramoyl-L-alanyl-D-isoglutamine(out) + 2 H(+)(out) = N-acetyl-D-muramoyl-L-alanyl-D-isoglutamine(in) + 2 H(+)(in). The enzyme catalyses N(alpha)-formyl-L-methionyl-L-leucyl-L-phenylalanine(out) + 2 H(+)(out) = N(alpha)-formyl-L-methionyl-L-leucyl-L-phenylalanine(in) + 2 H(+)(in). Functionally, electrogenic proton-coupled amino-acid transporter that transports oligopeptides of 2 to 4 amino acids with a preference for dipeptides. Transports neutral and monovalently charged peptides with a proton to peptide stoichiometry of 1:1 or 2:1. Primarily responsible for the absorption of dietary di- and tripeptides from the small intestinal lumen. Mediates transepithelial transport of muramyl and N-formylated bacterial dipeptides contributing to recognition of pathogenic bacteria by the mucosal immune system. In Oryctolagus cuniculus (Rabbit), this protein is Solute carrier family 15 member 1 (SLC15A1).